The sequence spans 736 residues: Catalase-peroxidase (736 aa).

The tract at residues 1-25 (MSENGKCPVTGKTSKPVAGGGTSNQ) is disordered. Positions 96 to 224 (WHSAGTYRMG…LAAVQMGLIY (129 aa)) form a cross-link, tryptophyl-tyrosyl-methioninium (Trp-Tyr) (with M-250). Histidine 97 (proton acceptor) is an active-site residue. Residues 224–250 (YVNPEGPDGNPDPIASGKDVRETFARM) constitute a cross-link (tryptophyl-tyrosyl-methioninium (Tyr-Met) (with W-96)). Histidine 265 contacts heme b. Residues 294–313 (GWKSSHGRGKGGDTISSGIE) form a disordered region.

It belongs to the peroxidase family. Peroxidase/catalase subfamily. In terms of assembly, homodimer or homotetramer. Requires heme b as cofactor. Formation of the three residue Trp-Tyr-Met cross-link is important for the catalase, but not the peroxidase activity of the enzyme.

The enzyme catalyses H2O2 + AH2 = A + 2 H2O. It carries out the reaction 2 H2O2 = O2 + 2 H2O. Bifunctional enzyme with both catalase and broad-spectrum peroxidase activity. The polypeptide is Catalase-peroxidase (Desulfatibacillum aliphaticivorans).